The primary structure comprises 317 residues: MTMETQMSQNVCPRNLWLLQPLTVLLLLASADSQAAAPPKAVLKLEPPWINVLQEDSVTLTCQGARSPESDSIQWFHNGNLIPTHTQPSYRFKANNNDSGEYTCQTGQTSLSDPVHLTVLSEWLVLQTPHLEFQEGETIMLRCHSWKDKPLVKVTFFQNGKSQKFSHLDPTFSIPQANHSHSGDYHCTGNIGYTLFSSKPVTITVQVPSMGSSSPMGIIVAVVIATAVAAIVAAVVALIYCRKKRISANSTDPVKAAQFEPPGRQMIAIRKRQLEETNNDYETADGGYMTLNPRAPTDDDKNIYLTLPPNDHVNSNN.

A signal peptide spans 1-33; that stretch reads MTMETQMSQNVCPRNLWLLQPLTVLLLLASADS. Topologically, residues 34-217 are extracellular; sequence QAAAPPKAVL…PSMGSSSPMG (184 aa). Ig-like C2-type domains lie at 39–118 and 122–204; these read PKAV…VHLT and EWLV…VTIT. Cystine bridges form between Cys62–Cys104 and Cys143–Cys187. Residues Asn97 and Asn178 are each glycosylated (N-linked (GlcNAc...) asparagine). Residues 218-240 traverse the membrane as a helical segment; sequence IIVAVVIATAVAAIVAAVVALIY. Residues 241–317 are Cytoplasmic-facing; the sequence is CRKKRISANS…PPNDHVNSNN (77 aa). Tyr288 and Tyr304 each carry phosphotyrosine; by SRC-type Tyr-kinases. The disordered stretch occupies residues 292-317; sequence NPRAPTDDDKNIYLTLPPNDHVNSNN.

As to quaternary structure, interacts with IGHG1. Interacts with INPP5D/SHIP1 and INPPL1/SHIP2, regulating its function. Interacts with APCS and FGR. Interacts with HCK. In terms of processing, phosphorylated by SRC-type Tyr-kinases such as LYN, BLK, FYN, HCK and SYK. Found on monocytes, neutrophils and eosinophil platelets.

It is found in the cell membrane. Functionally, binds to the Fc region of immunoglobulins gamma. Low affinity receptor. By binding to IgG it initiates cellular responses against pathogens and soluble antigens. Promotes phagocytosis of opsonized antigens. This is Low affinity immunoglobulin gamma Fc region receptor II-a (FCGR2A) from Homo sapiens (Human).